The sequence spans 1342 residues: DNA-directed RNA polymerase subunit beta (1342 aa).

The protein belongs to the RNA polymerase beta chain family. As to quaternary structure, the RNAP catalytic core consists of 2 alpha, 1 beta, 1 beta' and 1 omega subunit. When a sigma factor is associated with the core the holoenzyme is formed, which can initiate transcription.

It catalyses the reaction RNA(n) + a ribonucleoside 5'-triphosphate = RNA(n+1) + diphosphate. In terms of biological role, DNA-dependent RNA polymerase catalyzes the transcription of DNA into RNA using the four ribonucleoside triphosphates as substrates. The sequence is that of DNA-directed RNA polymerase subunit beta from Buchnera aphidicola subsp. Acyrthosiphon pisum (strain Tuc7).